We begin with the raw amino-acid sequence, 211 residues long: Histidine biosynthesis bifunctional protein HisIE (211 aa).

The phosphoribosyl-AMP cyclohydrolase stretch occupies residues 1 to 107 (MNKLIDFSKG…FNSEIESRFK (107 aa)). The phosphoribosyl-ATP pyrophosphohydrolase stretch occupies residues 108-211 (IQALAQTIHQ…KGERKKVQEW (104 aa)).

It in the N-terminal section; belongs to the PRA-CH family. In the C-terminal section; belongs to the PRA-PH family.

The protein resides in the cytoplasm. The enzyme catalyses 1-(5-phospho-beta-D-ribosyl)-ATP + H2O = 1-(5-phospho-beta-D-ribosyl)-5'-AMP + diphosphate + H(+). It catalyses the reaction 1-(5-phospho-beta-D-ribosyl)-5'-AMP + H2O = 1-(5-phospho-beta-D-ribosyl)-5-[(5-phospho-beta-D-ribosylamino)methylideneamino]imidazole-4-carboxamide. It functions in the pathway amino-acid biosynthesis; L-histidine biosynthesis; L-histidine from 5-phospho-alpha-D-ribose 1-diphosphate: step 2/9. It participates in amino-acid biosynthesis; L-histidine biosynthesis; L-histidine from 5-phospho-alpha-D-ribose 1-diphosphate: step 3/9. This Staphylococcus epidermidis (strain ATCC 12228 / FDA PCI 1200) protein is Histidine biosynthesis bifunctional protein HisIE.